The primary structure comprises 364 residues: DNA replication and repair protein RecF (364 aa).

30–37 (GANGSGKT) lines the ATP pocket.

Belongs to the RecF family.

It localises to the cytoplasm. The RecF protein is involved in DNA metabolism; it is required for DNA replication and normal SOS inducibility. RecF binds preferentially to single-stranded, linear DNA. It also seems to bind ATP. In Sodalis glossinidius (strain morsitans), this protein is DNA replication and repair protein RecF.